The primary structure comprises 370 residues: Probable butyrate kinase (370 aa).

This sequence belongs to the acetokinase family.

It localises to the cytoplasm. The catalysed reaction is butanoate + ATP = butanoyl phosphate + ADP. The polypeptide is Probable butyrate kinase (Elusimicrobium minutum (strain Pei191)).